A 162-amino-acid polypeptide reads, in one-letter code: Large ribosomal subunit protein uL11 (162 aa).

Residues 1–27 (MAGTIEVLVPGGEANPGPPLGPELGPT) form a disordered region.

The protein belongs to the universal ribosomal protein uL11 family. In terms of assembly, part of the 50S ribosomal subunit. Forms part of the ribosomal stalk which helps the ribosome interact with GTP-bound translation factors. Forms a heptameric L10(L12)2(L12)2(L12)2 complex, where L10 forms an elongated spine to which 3 L12 dimers bind in a sequential fashion.

Functionally, forms part of the ribosomal stalk which helps the ribosome interact with GTP-bound translation factors. In Haloarcula marismortui (strain ATCC 43049 / DSM 3752 / JCM 8966 / VKM B-1809) (Halobacterium marismortui), this protein is Large ribosomal subunit protein uL11.